The primary structure comprises 185 residues: Elongation factor P (185 aa).

It belongs to the elongation factor P family.

It localises to the cytoplasm. It functions in the pathway protein biosynthesis; polypeptide chain elongation. Involved in peptide bond synthesis. Stimulates efficient translation and peptide-bond synthesis on native or reconstituted 70S ribosomes in vitro. Probably functions indirectly by altering the affinity of the ribosome for aminoacyl-tRNA, thus increasing their reactivity as acceptors for peptidyl transferase. This is Elongation factor P from Kosmotoga olearia (strain ATCC BAA-1733 / DSM 21960 / TBF 19.5.1).